Here is a 288-residue protein sequence, read N- to C-terminus: Elongation factor Ts (288 aa).

The involved in Mg(2+) ion dislocation from EF-Tu stretch occupies residues 82 to 85 (TDFV).

Belongs to the EF-Ts family.

The protein localises to the cytoplasm. In terms of biological role, associates with the EF-Tu.GDP complex and induces the exchange of GDP to GTP. It remains bound to the aminoacyl-tRNA.EF-Tu.GTP complex up to the GTP hydrolysis stage on the ribosome. The polypeptide is Elongation factor Ts (Chlorobium luteolum (strain DSM 273 / BCRC 81028 / 2530) (Pelodictyon luteolum)).